The sequence spans 319 residues: Annexin A4 (319 aa).

N-acetylalanine is present on A2. T7 is modified (phosphothreonine). S12 is modified (phosphoserine). Annexin repeat units lie at residues 14–85 (FNAM…GMMT), 86–157 (PTVL…SLSA), 169–241 (ALVR…AIVK), and 245–316 (NKSA…VLCG). K213, K293, and K300 each carry N6-acetyllysine.

It belongs to the annexin family.

It is found in the zymogen granule membrane. In terms of biological role, calcium/phospholipid-binding protein which promotes membrane fusion and is involved in exocytosis. This is Annexin A4 from Homo sapiens (Human).